The chain runs to 322 residues: Transmembrane and ubiquitin-like domain-containing protein 2 (322 aa).

Residues 38 to 58 (VVAGVVVLILALVLAWLSTYV) traverse the membrane as a helical segment. The segment at 88-168 (VAGQGTPEPT…VRSEDSTCLP (81 aa)) is disordered. Positions 115-130 (EGGGDPTGEPGAGGGV) are enriched in gly residues. Residues 174-247 (ISVRLKFFND…IHCHRSPPGS (74 aa)) enclose the Ubiquitin-like domain. The next 2 membrane-spanning stretches (helical) occupy residues 267 to 287 (LGVS…GVVW) and 296 to 316 (FFTA…SFLV).

The protein localises to the membrane. The polypeptide is Transmembrane and ubiquitin-like domain-containing protein 2 (TMUB2) (Bos taurus (Bovine)).